We begin with the raw amino-acid sequence, 314 residues long: Glycerol-3-phosphate dehydrogenase [NAD(P)+] (314 aa).

Phenylalanine 11, arginine 30, and lysine 96 together coordinate NADPH. Positions 96, 124, and 126 each coordinate sn-glycerol 3-phosphate. An NADPH-binding site is contributed by alanine 128. Lysine 179, aspartate 232, serine 242, arginine 243, and asparagine 244 together coordinate sn-glycerol 3-phosphate. The active-site Proton acceptor is the lysine 179. Arginine 243 contributes to the NADPH binding site. Glutamate 264 contacts NADPH.

It belongs to the NAD-dependent glycerol-3-phosphate dehydrogenase family.

The protein localises to the cytoplasm. The enzyme catalyses sn-glycerol 3-phosphate + NAD(+) = dihydroxyacetone phosphate + NADH + H(+). It catalyses the reaction sn-glycerol 3-phosphate + NADP(+) = dihydroxyacetone phosphate + NADPH + H(+). It functions in the pathway membrane lipid metabolism; glycerophospholipid metabolism. Functionally, catalyzes the reduction of the glycolytic intermediate dihydroxyacetone phosphate (DHAP) to sn-glycerol 3-phosphate (G3P), the key precursor for phospholipid synthesis. The polypeptide is Glycerol-3-phosphate dehydrogenase [NAD(P)+] (Paracoccus denitrificans (strain Pd 1222)).